We begin with the raw amino-acid sequence, 127 residues long: Large ribosomal subunit protein bL17 (127 aa).

The protein belongs to the bacterial ribosomal protein bL17 family. As to quaternary structure, part of the 50S ribosomal subunit. Contacts protein L32.

The chain is Large ribosomal subunit protein bL17 from Actinobacillus pleuropneumoniae serotype 7 (strain AP76).